The following is a 54-amino-acid chain: MASEVRIKLLLECTECKRRNYATEKNKRNTPNKLELRKYCPWCRKHTVHREVKI.

The protein belongs to the bacterial ribosomal protein bL33 family.

This Thermus thermophilus (strain ATCC BAA-163 / DSM 7039 / HB27) protein is Large ribosomal subunit protein bL33.